The primary structure comprises 223 residues: Noggin-3 (223 aa).

A signal peptide spans Met1–Gly23. Residues Asn60 and Asn93 are each glycosylated (N-linked (GlcNAc...) asparagine).

Belongs to the noggin family. Homodimer; disulfide-linked.

The protein localises to the secreted. Its function is as follows. May function as an inhibitor of bone morphogenetic proteins (BMP) signaling during later stages of development including late phases of dorsoventral patterning, to refine the early pattern set up by the interaction of chordino and BMP2/4. Not involved in organizer function or early phases of dorsoventral pattern formation. In Danio rerio (Zebrafish), this protein is Noggin-3 (nog3).